The following is a 278-amino-acid chain: MPTKTSQHAFAGSERWVVPRYSSKPGTLIRLGSVLTDPEDLESSLNLDSIPPIPPHLLRDATPEVRMSVQTELSKSDSTLAKAAPALEGILTLGGGVEASRSQGVSSSLNISGTVKATVFRADKSYMDVLLKDKNVISYAKRGLGKPMFVVVGVATAGRVEMKETRHVTRKAGVSGKVGVEVIGEGEVGLERERSDKSCNEVRGEGGLDFAYRVREFGYSRVRGTVKDKGDWTGKVLFAGGKGPVVEKGGEVVPVFKEFKEGEVKLRATGSFDVAAKA.

It belongs to the gasdermin family. In terms of assembly, homooligomer; forms a homooligomeric ring-shaped pore complex when inserted in the membrane. Post-translationally, the precursor form is cleaved by het-Q2, generating the pore-forming protein (Gasdermin-like protein het-Q1, N-terminal).

It localises to the cell membrane. Functionally, gasdermin-like protein involved in heterokaryon incompatibility, a process that ensures that during spontaneous vegetative cell fusion, only compatible cells from the same colony survive (non-self-recognition). In P.anserina, the het-q locus exists as 2 incompatible alleles, het-Q1 (this entry) and het-Q2 (AC P0DW09). This form constitutes the precursor of the pore-forming protein: during the allorecognition process, it is cleaved by het-Q2, releasing the N-terminal moiety (Gasdermin-like protein het-Q1, N-terminal) that binds to membranes and forms pores, triggering cell death. Pore-forming protein that causes membrane permeabilization and cell death. Released upon cleavage and maturation by het-Q2 and binds to membrane inner leaflet lipids. Homooligomerizes within the membrane and forms pores of 10-15 nanometers (nm) of inner diameter, triggering cell death. The chain is Gasdermin-like protein het-Q1 from Podospora anserina (strain S / ATCC MYA-4624 / DSM 980 / FGSC 10383) (Pleurage anserina).